A 426-amino-acid chain; its full sequence is Mediator of RNA polymerase II transcription subunit 1 (426 aa).

A disordered region spans residues 324–356 (VGDAPAPAAQPPLHRRRSSNKGCRRASAAESAT). Residues 336–347 (LHRRRSSNKGCR) are compositionally biased toward basic residues.

Belongs to the Mediator complex subunit 1 family. In terms of assembly, component of the Mediator complex.

The protein localises to the nucleus. In terms of biological role, component of the Mediator complex, a coactivator involved in the regulated transcription of nearly all RNA polymerase II-dependent genes. Mediator functions as a bridge to convey information from gene-specific regulatory proteins to the basal RNA polymerase II transcription machinery. Mediator is recruited to promoters by direct interactions with regulatory proteins and serves as a scaffold for the assembly of a functional preinitiation complex with RNA polymerase II and the general transcription factors. This Eremothecium gossypii (strain ATCC 10895 / CBS 109.51 / FGSC 9923 / NRRL Y-1056) (Yeast) protein is Mediator of RNA polymerase II transcription subunit 1 (MED1).